Consider the following 106-residue polypeptide: MSKTNDWLDFDQLAEDKVRDALKPPSMYKVILVNDDYTPMEFVIDVLQKFFSYDVERATQLMLTVHYQGKAICGVFTAEVAETKVAMVNNYARENEHPLLCTLEKA.

Belongs to the ClpS family. In terms of assembly, binds to the N-terminal domain of the chaperone ClpA.

Its function is as follows. Involved in the modulation of the specificity of the ClpAP-mediated ATP-dependent protein degradation. The sequence is that of ATP-dependent Clp protease adapter protein ClpS from Escherichia fergusonii (strain ATCC 35469 / DSM 13698 / CCUG 18766 / IAM 14443 / JCM 21226 / LMG 7866 / NBRC 102419 / NCTC 12128 / CDC 0568-73).